Reading from the N-terminus, the 834-residue chain is Prominin-2 (834 aa).

The first 26 residues, 1–26, serve as a signal peptide directing secretion; the sequence is MKHTLALLAPLLGLGLGLALSQLAAG. At 27 to 106 the chain is on the extracellular side; that stretch reads ATDCKFLGPA…NEVVRYEAGY (80 aa). The helical transmembrane segment at 107 to 127 threads the bilayer; it reads VVCAVIAGLYLLLVPTAGLCF. Residues 128–153 are Cytoplasmic-facing; sequence CCCRCHRRCGGRVKTEHKALACERAA. The chain crosses the membrane as a helical span at residues 154-174; the sequence is LMVFLLLTTLLLLIGVVCAFV. The Extracellular portion of the chain corresponds to 175–426; that stretch reads TNQRTHEQMG…EVQRYETYRW (252 aa). N270 is a glycosylation site (N-linked (GlcNAc...) asparagine). A helical membrane pass occupies residues 427–447; that stretch reads IVGCVLCSVVLFVVLCNLLGL. Over 448-472 the chain is Cytoplasmic; the sequence is NLGIWGLSARDDPSHPEAKGEAGAR. The chain crosses the membrane as a helical span at residues 473 to 493; the sequence is FLMAGVGLSFLFAAPLILLVF. The Extracellular portion of the chain corresponds to 494 to 779; it reads ATFLVGGNVQ…LCDMMADPWN (286 aa). At S727 the chain carries Phosphoserine. The chain crosses the membrane as a helical span at residues 780 to 800; the sequence is AFWFCLAWCTFFLIPSIIFAV. The Cytoplasmic portion of the chain corresponds to 801 to 834; it reads KTSKYFRPIRKRLSSTSSEETQLFHIPRVTSLKL. A Phosphoserine modification is found at S818.

The protein belongs to the prominin family. In terms of assembly, binds cholesterol. Post-translationally, glycosylated. As to expression, present in saliva within small membrane particles (at protein level). Expressed in kidney, prostate, trachea, esophagus, salivary gland, thyroid gland, mammary gland adrenal gland, placenta, stomach, spinal cord and liver. In submucosal tumor, expressed in spindle-shaped or stellate stromal cells. Expressed in prostate cancer cell lines.

The protein resides in the apical cell membrane. Its subcellular location is the basolateral cell membrane. The protein localises to the cell projection. It is found in the microvillus membrane. It localises to the cilium membrane. The polypeptide is Prominin-2 (PROM2) (Homo sapiens (Human)).